A 511-amino-acid polypeptide reads, in one-letter code: 2-isopropylmalate synthase (511 aa).

The Pyruvate carboxyltransferase domain occupies 6–269 (IIIFDTTLRD…YTDIKCENIF (264 aa)). Mn(2+) contacts are provided by D15, H203, H205, and N239. The tract at residues 394–511 (ILEKLSVISG…SLKVEERKMA (118 aa)) is regulatory domain.

Belongs to the alpha-IPM synthase/homocitrate synthase family. LeuA type 1 subfamily. As to quaternary structure, homodimer. Requires Mn(2+) as cofactor.

The protein resides in the cytoplasm. It catalyses the reaction 3-methyl-2-oxobutanoate + acetyl-CoA + H2O = (2S)-2-isopropylmalate + CoA + H(+). It participates in amino-acid biosynthesis; L-leucine biosynthesis; L-leucine from 3-methyl-2-oxobutanoate: step 1/4. In terms of biological role, catalyzes the condensation of the acetyl group of acetyl-CoA with 3-methyl-2-oxobutanoate (2-ketoisovalerate) to form 3-carboxy-3-hydroxy-4-methylpentanoate (2-isopropylmalate). The polypeptide is 2-isopropylmalate synthase (Campylobacter jejuni subsp. jejuni serotype O:6 (strain 81116 / NCTC 11828)).